The following is a 382-amino-acid chain: Glutamyl-tRNA reductase (382 aa).

Residues 38-41 (TCNR), Ser85, 90-92 (ENQ), and Gln96 contribute to the substrate site. Cys39 (nucleophile) is an active-site residue. 164-169 (GAGEIG) lines the NADP(+) pocket.

This sequence belongs to the glutamyl-tRNA reductase family. As to quaternary structure, homodimer.

The catalysed reaction is (S)-4-amino-5-oxopentanoate + tRNA(Glu) + NADP(+) = L-glutamyl-tRNA(Glu) + NADPH + H(+). The protein operates within porphyrin-containing compound metabolism; protoporphyrin-IX biosynthesis; 5-aminolevulinate from L-glutamyl-tRNA(Glu): step 1/2. Catalyzes the NADPH-dependent reduction of glutamyl-tRNA(Glu) to glutamate 1-semialdehyde (GSA). The polypeptide is Glutamyl-tRNA reductase (Methanococcus maripaludis (strain DSM 14266 / JCM 13030 / NBRC 101832 / S2 / LL)).